A 548-amino-acid chain; its full sequence is 2-succinyl-5-enolpyruvyl-6-hydroxy-3-cyclohexene-1-carboxylate synthase (548 aa).

Belongs to the TPP enzyme family. MenD subfamily. In terms of assembly, homodimer. Requires Mg(2+) as cofactor. Mn(2+) serves as cofactor. The cofactor is thiamine diphosphate.

The catalysed reaction is isochorismate + 2-oxoglutarate + H(+) = 5-enolpyruvoyl-6-hydroxy-2-succinyl-cyclohex-3-ene-1-carboxylate + CO2. It functions in the pathway quinol/quinone metabolism; 1,4-dihydroxy-2-naphthoate biosynthesis; 1,4-dihydroxy-2-naphthoate from chorismate: step 2/7. Its pathway is quinol/quinone metabolism; menaquinone biosynthesis. In terms of biological role, catalyzes the thiamine diphosphate-dependent decarboxylation of 2-oxoglutarate and the subsequent addition of the resulting succinic semialdehyde-thiamine pyrophosphate anion to isochorismate to yield 2-succinyl-5-enolpyruvyl-6-hydroxy-3-cyclohexene-1-carboxylate (SEPHCHC). The chain is 2-succinyl-5-enolpyruvyl-6-hydroxy-3-cyclohexene-1-carboxylate synthase from Mycolicibacterium vanbaalenii (strain DSM 7251 / JCM 13017 / BCRC 16820 / KCTC 9966 / NRRL B-24157 / PYR-1) (Mycobacterium vanbaalenii).